The chain runs to 222 residues: UPF0758 protein YicR (222 aa).

Residues 100–222 enclose the MPN domain; sequence PLLSPEMTRE…YVSFAERGWI (123 aa). Residues His-171, His-173, and Asp-184 each coordinate Zn(2+). Residues 171–184 carry the JAMM motif motif; the sequence is HNHPSGCAEPSKAD.

It belongs to the UPF0758 family. YicR subfamily.

The protein is UPF0758 protein YicR of Shigella dysenteriae serotype 1 (strain Sd197).